The sequence spans 362 residues: MTTPLTLENIRRAPKALLHDHLDGGLRPSTVLELAEQYGYDDLPAHDADELAEFFRTAAHSGSLVRYLEPFAHTVGVMQNHDALHRVARECVEDLADDNVVYAEIRFAPELHIDGGLSLDAVVEAVLAGFADGEKAAAAAGRTITVRCLVTAMRHAARSREIAALAIRFRDQGVVGFDIAGAEAGYPPSRHLDAFEYMRSNNARFTIHAGEAFGLPSIHEAIAFCGADRLGHGVRIVDDIDMDAEGGPKLGRLAALLRDKRIPFEMCPSSNVQTGAVASIAEHPFDRLARLRFRVTVNTDNRLMSDTTMSLEMLRLVEAFGYGWSDLERFTINAMKSAFISFPERLAIIDEVIKPRYAVLVG.

The Zn(2+) site is built by H19 and H21. Substrate is bound by residues H21, D23, and G181. H208 contacts Zn(2+). E211 acts as the Proton donor in catalysis. D300 provides a ligand contact to Zn(2+).

It belongs to the metallo-dependent hydrolases superfamily. Adenosine and AMP deaminases family. Adenosine deaminase subfamily. Zn(2+) serves as cofactor.

It carries out the reaction adenosine + H2O + H(+) = inosine + NH4(+). The catalysed reaction is 2'-deoxyadenosine + H2O + H(+) = 2'-deoxyinosine + NH4(+). In terms of biological role, catalyzes the hydrolytic deamination of adenosine and 2-deoxyadenosine. This chain is Adenosine deaminase, found in Mycolicibacterium gilvum (strain PYR-GCK) (Mycobacterium gilvum (strain PYR-GCK)).